A 454-amino-acid chain; its full sequence is Ribosomal protein uS12 methylthiotransferase RimO (454 aa).

In terms of domain architecture, MTTase N-terminal spans 14–125 (SKVAFSHVGC…IAKVLDRVEK (112 aa)). [4Fe-4S] cluster is bound by residues Cys23, Cys59, Cys88, Cys163, Cys167, and Cys170. The Radical SAM core domain maps to 149–378 (DKNKFVAYLR…ISVQQNISKD (230 aa)). Residues 381–452 (QSYVGSKMKI…EYDLYGETIK (72 aa)) form the TRAM domain.

It belongs to the methylthiotransferase family. RimO subfamily. [4Fe-4S] cluster serves as cofactor.

It localises to the cytoplasm. It catalyses the reaction L-aspartate(89)-[ribosomal protein uS12]-hydrogen + (sulfur carrier)-SH + AH2 + 2 S-adenosyl-L-methionine = 3-methylsulfanyl-L-aspartate(89)-[ribosomal protein uS12]-hydrogen + (sulfur carrier)-H + 5'-deoxyadenosine + L-methionine + A + S-adenosyl-L-homocysteine + 2 H(+). Functionally, catalyzes the methylthiolation of an aspartic acid residue of ribosomal protein uS12. The protein is Ribosomal protein uS12 methylthiotransferase RimO of Prochlorococcus marinus (strain MIT 9312).